Here is a 305-residue protein sequence, read N- to C-terminus: Tyrosine recombinase XerC (305 aa).

Residues 1–84 enclose the Core-binding (CB) domain; it reads MNEVFESYLT…TLRGFYKYAL (84 aa). The Tyr recombinase domain maps to 105 to 299; sequence KLPVFMFPKQ…TAEQLQNLYK (195 aa). Catalysis depends on residues R146, K170, H251, R254, and H277. The active-site O-(3'-phospho-DNA)-tyrosine intermediate is Y286.

The protein belongs to the 'phage' integrase family. XerC subfamily. In terms of assembly, forms a cyclic heterotetrameric complex composed of two molecules of XerC and two molecules of XerD.

Its subcellular location is the cytoplasm. Functionally, site-specific tyrosine recombinase, which acts by catalyzing the cutting and rejoining of the recombining DNA molecules. The XerC-XerD complex is essential to convert dimers of the bacterial chromosome into monomers to permit their segregation at cell division. It also contributes to the segregational stability of plasmids. The chain is Tyrosine recombinase XerC from Treponema denticola (strain ATCC 35405 / DSM 14222 / CIP 103919 / JCM 8153 / KCTC 15104).